The sequence spans 359 residues: G-protein coupled receptor 15 (359 aa).

The Extracellular segment spans residues 1 to 33; the sequence is MDPEETSVYLDYYYATSPNPDIRETHSHVPYTS. A helical transmembrane segment spans residues 34–54; sequence VFLPVFYTAVFLTGVLGNLVL. At 55-69 the chain is on the cytoplasmic side; the sequence is MGALHFKPGSRRLID. Residues 70–90 form a helical membrane-spanning segment; the sequence is IFIINLAASDFIFLVTLPLWV. The Extracellular segment spans residues 91–120; it reads DKEASLGLWRTGSFLCKGSSYMISVNMHCS. The chain crosses the membrane as a helical span at residues 121-141; sequence VFLLTCMSVDRYLAIVCPVVS. The Cytoplasmic segment spans residues 142 to 149; that stretch reads RKFRRTDC. A helical transmembrane segment spans residues 150–170; the sequence is AYVVCASIWFISCLLGLPTLL. Over 171–192 the chain is Extracellular; sequence SRELTLIDDKPYCAEKKATPLK. A helical transmembrane segment spans residues 193–213; the sequence is LIWSLVALIFTFFVPLLNIVT. Over 214–239 the chain is Cytoplasmic; sequence CYCCIARKLCAHYQQSGRHNKKLKKS. Residues 240-260 form a helical membrane-spanning segment; sequence IKIILIVVAAFLVSWLPFNTF. At 261–283 the chain is on the extracellular side; it reads KLLAIVSGLQERYFPSAMLQLGM. The chain crosses the membrane as a helical span at residues 284-304; that stretch reads EVSGPLAFANSCVNPFIYYIF. Topologically, residues 305–359 are cytoplasmic; that stretch reads DSYIRRAIVHCLCPCLKNYDFGSSTETSDSHLTKALSTFIHAEDFTRRRKRSVSL. A Phosphoserine modification is found at S358.

The protein belongs to the G-protein coupled receptor 1 family. As to quaternary structure, interacts with adapter YWHAE; this interaction promotes ER-to-Golgi transport of GPR15. Phosphorylation is necessary for YWHAE binding and efficient surface expression. Post-translationally, O-glycosylated. Sialylated O-glycans in the N-terminal tail inhibits binding of GPR15LG. In terms of processing, sulfation is required for efficient binding of GPR15LG.

It is found in the cell membrane. Functionally, g protein-coupled receptor that plays an important role in immune homeostasis. Acts via its natural ligand GPR15LG, a chemokine-like polypeptide strongly expressed in gastrointestinal tissues. GPR15-GPR15LG signaling axis regulates intestinal homeostasis and inflammation through the migration of immune cells. Controls thereby the specific homing of T-cells, particularly FOXP3+ regulatory T-cells (Tregs), to the large intestine lamina propria. Also required for skin localization of thymus-derived dendritic epidermal T-cells. Plays an important role in mediating cytoprotective function as well as angiogenesis of thrombomodulin. Mechanistically, preferentially signals through the Gi/o pathway to inhibit adenylate cyclase activity and activate a phosphatidylinositol-calcium second messenger system that regulates the release of Ca(2+) ions from intracellular stores. The protein is G-protein coupled receptor 15 (GPR15) of Macaca fascicularis (Crab-eating macaque).